The following is a 153-amino-acid chain: Ribosome maturation factor RimP (153 aa).

Belongs to the RimP family.

The protein localises to the cytoplasm. Its function is as follows. Required for maturation of 30S ribosomal subunits. This Coxiella burnetii (strain RSA 331 / Henzerling II) protein is Ribosome maturation factor RimP.